The following is a 234-amino-acid chain: Thiamine-phosphate synthase (234 aa).

4-amino-2-methyl-5-(diphosphooxymethyl)pyrimidine-binding positions include 52–56 and N84; that span reads QYRSK. The Mg(2+) site is built by D85 and D104. A 4-amino-2-methyl-5-(diphosphooxymethyl)pyrimidine-binding site is contributed by S123. Position 150-152 (150-152) interacts with 2-[(2R,5Z)-2-carboxy-4-methylthiazol-5(2H)-ylidene]ethyl phosphate; it reads SVT. Position 153 (K153) interacts with 4-amino-2-methyl-5-(diphosphooxymethyl)pyrimidine. Position 180 (G180) interacts with 2-[(2R,5Z)-2-carboxy-4-methylthiazol-5(2H)-ylidene]ethyl phosphate.

The protein belongs to the thiamine-phosphate synthase family. Mg(2+) is required as a cofactor.

It carries out the reaction 2-[(2R,5Z)-2-carboxy-4-methylthiazol-5(2H)-ylidene]ethyl phosphate + 4-amino-2-methyl-5-(diphosphooxymethyl)pyrimidine + 2 H(+) = thiamine phosphate + CO2 + diphosphate. It catalyses the reaction 2-(2-carboxy-4-methylthiazol-5-yl)ethyl phosphate + 4-amino-2-methyl-5-(diphosphooxymethyl)pyrimidine + 2 H(+) = thiamine phosphate + CO2 + diphosphate. The catalysed reaction is 4-methyl-5-(2-phosphooxyethyl)-thiazole + 4-amino-2-methyl-5-(diphosphooxymethyl)pyrimidine + H(+) = thiamine phosphate + diphosphate. The protein operates within cofactor biosynthesis; thiamine diphosphate biosynthesis; thiamine phosphate from 4-amino-2-methyl-5-diphosphomethylpyrimidine and 4-methyl-5-(2-phosphoethyl)-thiazole: step 1/1. Its function is as follows. Condenses 4-methyl-5-(beta-hydroxyethyl)thiazole monophosphate (THZ-P) and 2-methyl-4-amino-5-hydroxymethyl pyrimidine pyrophosphate (HMP-PP) to form thiamine monophosphate (TMP). The chain is Thiamine-phosphate synthase from Nitrosospira multiformis (strain ATCC 25196 / NCIMB 11849 / C 71).